A 198-amino-acid chain; its full sequence is FMN-dependent NADH:quinone oxidoreductase 2 (198 aa).

136-139 (SRGG) contacts FMN.

The protein belongs to the azoreductase type 1 family. In terms of assembly, homodimer. The cofactor is FMN.

It catalyses the reaction 2 a quinone + NADH + H(+) = 2 a 1,4-benzosemiquinone + NAD(+). It carries out the reaction N,N-dimethyl-1,4-phenylenediamine + anthranilate + 2 NAD(+) = 2-(4-dimethylaminophenyl)diazenylbenzoate + 2 NADH + 2 H(+). In terms of biological role, quinone reductase that provides resistance to thiol-specific stress caused by electrophilic quinones. Its function is as follows. Also exhibits azoreductase activity. Catalyzes the reductive cleavage of the azo bond in aromatic azo compounds to the corresponding amines. The protein is FMN-dependent NADH:quinone oxidoreductase 2 of Clostridium perfringens (strain 13 / Type A).